Here is a 203-residue protein sequence, read N- to C-terminus: Small ribosomal subunit protein uS4c (203 aa).

A disordered region spans residues 18–42 (LPGLTSKRPKNRKDSMNMNRSSSRK). The segment covering 33–42 (MNMNRSSSRK) has biased composition (polar residues). One can recognise an S4 RNA-binding domain in the interval 91 to 152 (MRLDNIIFRL…QPRLRAIIKK (62 aa)).

The protein belongs to the universal ribosomal protein uS4 family. In terms of assembly, part of the 30S ribosomal subunit. Contacts protein S5. The interaction surface between S4 and S5 is involved in control of translational fidelity.

The protein resides in the plastid. It is found in the chloroplast. In terms of biological role, one of the primary rRNA binding proteins, it binds directly to 16S rRNA where it nucleates assembly of the body of the 30S subunit. With S5 and S12 plays an important role in translational accuracy. The polypeptide is Small ribosomal subunit protein uS4c (rps4) (Pinus koraiensis (Korean pine)).